A 424-amino-acid polypeptide reads, in one-letter code: CinA-like protein (424 aa).

Belongs to the CinA family.

The polypeptide is CinA-like protein (Nostoc sp. (strain PCC 7120 / SAG 25.82 / UTEX 2576)).